The primary structure comprises 869 residues: Protein translocase subunit SecA (869 aa).

ATP contacts are provided by residues Gln-85, Gly-103–Thr-107, and Asp-508.

It belongs to the SecA family. In terms of assembly, monomer and homodimer. Part of the essential Sec protein translocation apparatus which comprises SecA, SecYEG and auxiliary proteins SecDF. Other proteins may also be involved.

The protein localises to the cell membrane. Its subcellular location is the cytoplasm. The enzyme catalyses ATP + H2O + cellular proteinSide 1 = ADP + phosphate + cellular proteinSide 2.. In terms of biological role, part of the Sec protein translocase complex. Interacts with the SecYEG preprotein conducting channel. Has a central role in coupling the hydrolysis of ATP to the transfer of proteins into and across the cell membrane, serving as an ATP-driven molecular motor driving the stepwise translocation of polypeptide chains across the membrane. This chain is Protein translocase subunit SecA, found in Deinococcus deserti (strain DSM 17065 / CIP 109153 / LMG 22923 / VCD115).